Reading from the N-terminus, the 194-residue chain is Peptidyl-tRNA hydrolase (194 aa).

Tyr16 is a tRNA binding site. His21 serves as the catalytic Proton acceptor. Residues Phe67, Asn69, and Asn115 each contribute to the tRNA site.

The protein belongs to the PTH family. Monomer.

It is found in the cytoplasm. It catalyses the reaction an N-acyl-L-alpha-aminoacyl-tRNA + H2O = an N-acyl-L-amino acid + a tRNA + H(+). Its function is as follows. Hydrolyzes ribosome-free peptidyl-tRNAs (with 1 or more amino acids incorporated), which drop off the ribosome during protein synthesis, or as a result of ribosome stalling. Catalyzes the release of premature peptidyl moieties from peptidyl-tRNA molecules trapped in stalled 50S ribosomal subunits, and thus maintains levels of free tRNAs and 50S ribosomes. The polypeptide is Peptidyl-tRNA hydrolase (Shigella dysenteriae serotype 1 (strain Sd197)).